Reading from the N-terminus, the 315-residue chain is Ribosomal RNA small subunit methyltransferase H (315 aa).

Residues glycine 34–histidine 36, aspartate 53, aspartate 100, and histidine 107 contribute to the S-adenosyl-L-methionine site.

This sequence belongs to the methyltransferase superfamily. RsmH family.

The protein localises to the cytoplasm. The catalysed reaction is cytidine(1402) in 16S rRNA + S-adenosyl-L-methionine = N(4)-methylcytidine(1402) in 16S rRNA + S-adenosyl-L-homocysteine + H(+). Functionally, specifically methylates the N4 position of cytidine in position 1402 (C1402) of 16S rRNA. This Treponema denticola (strain ATCC 35405 / DSM 14222 / CIP 103919 / JCM 8153 / KCTC 15104) protein is Ribosomal RNA small subunit methyltransferase H.